The sequence spans 806 residues: Enhancer of polycomb-like protein 1 (806 aa).

Disordered regions lie at residues 403–461 (AITS…QEIG) and 751–806 (SLQQ…NAAA). Residues 411 to 420 (KRAKSSKSSK) show a composition bias toward basic residues. The span at 421-439 (LHKEDSGLYADEKGSEPKK) shows a compositional bias: basic and acidic residues. Residues 751–779 (SLQQQQMLQKGQQPINNAPHSQSSSPPSH) show a composition bias toward low complexity. Positions 785–795 (NPGSTPNQSSP) are enriched in polar residues.

The protein belongs to the enhancer of polycomb family. As to quaternary structure, component of the NuA4 histone acetyltransferase complex.

Its subcellular location is the nucleus. Functionally, component of the NuA4 histone acetyltransferase complex which is involved in transcriptional activation of selected genes principally by acetylation of nucleosomal histone H4 and H2A. The NuA4 complex is also involved in DNA repair. Involved in gene silencing by neighboring heterochromatin, blockage of the silencing spreading along the chromosome, and required for cell cycle progression through G2/M. The polypeptide is Enhancer of polycomb-like protein 1 (EPL1) (Kluyveromyces lactis (strain ATCC 8585 / CBS 2359 / DSM 70799 / NBRC 1267 / NRRL Y-1140 / WM37) (Yeast)).